A 115-amino-acid chain; its full sequence is Macroconotoxin Mu8.1 (115 aa).

The N-terminal stretch at 1–21 (MDMKMTFSGLVLVVLVTTVVG) is a signal peptide. A propeptide spanning residues 22 to 26 (SSVRR) is cleaved from the precursor. Intrachain disulfides connect cysteine 36-cysteine 77, cysteine 44-cysteine 60, cysteine 48-cysteine 56, cysteine 83-cysteine 115, and cysteine 87-cysteine 97. Glutamate 40 contacts Zn(2+). Histidine 68 is a Zn(2+) binding site.

As to quaternary structure, mostly found as a homodimer in solution; non-covalently bound. In terms of tissue distribution, expressed by the venom duct.

It localises to the secreted. Its function is as follows. Modestly and reversibly inhibits Cav2.3/CACNA1E (IC(50)=5.8 uM) recombinantly expressed in HEK293 cells without affecting the voltage dependence of activation. In mouse DRG sensory neurons, modulates depolarization-induced calcium influx. This Conus mucronatus (Pointed cone) protein is Macroconotoxin Mu8.1.